Here is a 477-residue protein sequence, read N- to C-terminus: Mitochondrial adenyl nucleotide antiporter SLC25A24 (477 aa).

The regulatory N-terminal domain stretch occupies residues 1–173 (MLRWLRDFVL…RFWKHSTGID (173 aa)). At 1-197 (MLRWLRDFVL…EKKSGQWWRQ (197 aa)) the chain is on the mitochondrial intermembrane side. 4 EF-hand domains span residues 19-54 (EQPT…LGIP), 55-88 (LGQD…KDHE), 86-121 (DHEK…LGLT), and 122-157 (ISEQ…NPVT). Ca(2+)-binding residues include Asp-32, Asn-34, Asp-36, Val-38, Glu-43, Asp-68, Asn-70, Asp-72, Lys-74, Glu-79, Asp-99, Asn-101, Asp-103, Lys-105, Glu-110, Asp-135, Asp-137, Thr-139, Thr-141, and Glu-146. Positions 159-168 (IEEIIRFWKH) are linker region. The segment at 174 to 477 (IGDSLTIPDE…MKQTLGVTQK (304 aa)) is C-terminal transmembrane transporter domain. Solcar repeat units lie at residues 192–278 (GQWW…YKKL), 286–371 (IGTF…LKSY), and 383–471 (PGVM…MKQT). The helical transmembrane segment at 198–215 (LLAGGIAGAVSRTSTAPL) threads the bilayer. Residues 216–252 (DRLKIMMQVHGSKSDKMNIFGGFRQMVKEGGIRSLWR) lie on the Mitochondrial matrix side of the membrane. The chain crosses the membrane as a helical span at residues 253–272 (GNGTNVIKIAPETAVKFWAY). Over 273 to 295 (EQYKKLLTEEGQKIGTFERFISG) the chain is Mitochondrial intermembrane. Residues 296–309 (SMAGATAQTFIYPM) form a helical membrane-spanning segment. Residues 310–345 (EVMKTRLAVGKTGQYSGIYDCAKKILKHEGLGAFYK) lie on the Mitochondrial matrix side of the membrane. Lys-320 carries the N6-acetyllysine; alternate modification. Residue Lys-320 is modified to N6-succinyllysine; alternate. Position 336 is an N6-acetyllysine (Lys-336). A helical transmembrane segment spans residues 346 to 365 (GYVPNLLGIIPYAGIDLAVY). The Mitochondrial intermembrane segment spans residues 366 to 388 (ELLKSYWLDNFAKDSVNPGVMVL). The helical transmembrane segment at 389-406 (LGCGALSSTCGQLASYPL) threads the bilayer. The Mitochondrial matrix segment spans residues 407–445 (ALVRTRMQAQAMLEGSPQLNMVGLFRRIISKEGIPGLYR). Lys-437 bears the N6-acetyllysine; alternate mark. Residue Lys-437 is modified to N6-succinyllysine; alternate. Residues 446–465 (GITPNFMKVLPAVGISYVVY) traverse the membrane as a helical segment. Residues 466–477 (ENMKQTLGVTQK) are Mitochondrial intermembrane-facing.

This sequence belongs to the mitochondrial carrier (TC 2.A.29) family. In terms of assembly, monomer. In terms of tissue distribution, expressed in all tissues tested. Highly expressed in testis, expressed at intermediate level in small intestine and pancreas, and weakly expressed in kidney, spleen, liver, skeletal muscle and heart.

The protein resides in the mitochondrion inner membrane. The enzyme catalyses Mg(2+)(out) + phosphate(in) + ATP(out) = Mg(2+)(in) + phosphate(out) + ATP(in). The catalysed reaction is ADP(out) + phosphate(in) + H(+)(out) = ADP(in) + phosphate(out) + H(+)(in). It catalyses the reaction AMP(out) + phosphate(in) = AMP(in) + phosphate(out). It carries out the reaction phosphate(in) + ATP(out) + 2 H(+)(out) = phosphate(out) + ATP(in) + 2 H(+)(in). The enzyme catalyses dADP(in) + ADP(out) = dADP(out) + ADP(in). The catalysed reaction is Mg(2+)(in) + ADP(out) + ATP(in) + H(+)(out) = Mg(2+)(out) + ADP(in) + ATP(out) + H(+)(in). It catalyses the reaction ADP(out) + diphosphate(in) = ADP(in) + diphosphate(out). It carries out the reaction dAMP(in) + ADP(out) + H(+)(out) = dAMP(out) + ADP(in) + H(+)(in). The enzyme catalyses 3'-AMP(in) + ADP(out) + H(+)(out) = 3'-AMP(out) + ADP(in) + H(+)(in). The catalysed reaction is dAMP(out) + phosphate(in) = dAMP(in) + phosphate(out). It catalyses the reaction 3'-AMP(out) + phosphate(in) = 3'-AMP(in) + phosphate(out). It carries out the reaction dADP(out) + phosphate(in) + H(+)(out) = dADP(in) + phosphate(out) + H(+)(in). With respect to regulation, activated by an increase in cytosolic calcium levels that induce a conformational change of the N-terminal regulatory domain, uncapping the channel and allowing transport. Inhibited by bathophenanthroline, mersalyl, p-hydroxymercuribenzoate, bromcresol purple and tannic acid. Electroneutral antiporter that mediates the transport of adenyl nucleotides through the inner mitochondrial membrane. Originally identified as an ATP-magnesium/inorganic phosphate antiporter, it also acts as a broad specificity adenyl nucleotide antiporter. By regulating the mitochondrial matrix adenyl nucleotide pool could adapt to changing cellular energetic demands and indirectly regulate adenyl nucleotide-dependent metabolic pathways. In vitro, a low activity is also observed with guanyl and pyrimidine nucleotides. May play a role in protecting cells against oxidative stress-induced cell death, by buffering calcium levels in the mitochondrial matrix through the formation of calcium-phosphate precipitates. The sequence is that of Mitochondrial adenyl nucleotide antiporter SLC25A24 from Homo sapiens (Human).